The chain runs to 316 residues: 4-hydroxy-3-methylbut-2-enyl diphosphate reductase (316 aa).

Cys12 is a [4Fe-4S] cluster binding site. (2E)-4-hydroxy-3-methylbut-2-enyl diphosphate contacts are provided by His41 and His74. His41 and His74 together coordinate dimethylallyl diphosphate. Residues His41 and His74 each contribute to the isopentenyl diphosphate site. Cys96 is a [4Fe-4S] cluster binding site. Position 124 (His124) interacts with (2E)-4-hydroxy-3-methylbut-2-enyl diphosphate. His124 provides a ligand contact to dimethylallyl diphosphate. Residue His124 participates in isopentenyl diphosphate binding. The active-site Proton donor is Glu126. Thr167 lines the (2E)-4-hydroxy-3-methylbut-2-enyl diphosphate pocket. Cys197 contributes to the [4Fe-4S] cluster binding site. (2E)-4-hydroxy-3-methylbut-2-enyl diphosphate is bound by residues Ser225, Ser226, Asn227, and Ser269. Dimethylallyl diphosphate is bound by residues Ser225, Ser226, Asn227, and Ser269. Isopentenyl diphosphate-binding residues include Ser225, Ser226, Asn227, and Ser269.

The protein belongs to the IspH family. As to quaternary structure, homodimer. The cofactor is [4Fe-4S] cluster.

It catalyses the reaction isopentenyl diphosphate + 2 oxidized [2Fe-2S]-[ferredoxin] + H2O = (2E)-4-hydroxy-3-methylbut-2-enyl diphosphate + 2 reduced [2Fe-2S]-[ferredoxin] + 2 H(+). The catalysed reaction is dimethylallyl diphosphate + 2 oxidized [2Fe-2S]-[ferredoxin] + H2O = (2E)-4-hydroxy-3-methylbut-2-enyl diphosphate + 2 reduced [2Fe-2S]-[ferredoxin] + 2 H(+). It participates in isoprenoid biosynthesis; dimethylallyl diphosphate biosynthesis; dimethylallyl diphosphate from (2E)-4-hydroxy-3-methylbutenyl diphosphate: step 1/1. The protein operates within isoprenoid biosynthesis; isopentenyl diphosphate biosynthesis via DXP pathway; isopentenyl diphosphate from 1-deoxy-D-xylulose 5-phosphate: step 6/6. In terms of biological role, catalyzes the conversion of 1-hydroxy-2-methyl-2-(E)-butenyl 4-diphosphate (HMBPP) into a mixture of isopentenyl diphosphate (IPP) and dimethylallyl diphosphate (DMAPP). Acts in the terminal step of the DOXP/MEP pathway for isoprenoid precursor biosynthesis. The protein is 4-hydroxy-3-methylbut-2-enyl diphosphate reductase of Enterobacter sp. (strain 638).